We begin with the raw amino-acid sequence, 283 residues long: N-terminal Xaa-Pro-Lys N-methyltransferase 2 (283 aa).

S-adenosyl-L-methionine contacts are provided by residues glycine 124, arginine 129, aspartate 146, 174 to 175, glutamine 190, and histidine 195; that span reads LQ.

The protein belongs to the methyltransferase superfamily. NTM1 family.

Its subcellular location is the nucleus. It catalyses the reaction N-terminal L-alanyl-L-prolyl-L-lysyl-[protein] + S-adenosyl-L-methionine = N-terminal N-methyl-L-alanyl-L-prolyl-L-lysyl-[protein] + S-adenosyl-L-homocysteine + H(+). It carries out the reaction N-terminal L-prolyl-L-prolyl-L-lysyl-[protein] + S-adenosyl-L-methionine = N-terminal N-methyl-L-prolyl-L-prolyl-L-lysyl-[protein] + S-adenosyl-L-homocysteine + H(+). The enzyme catalyses N-terminal L-seryl-L-prolyl-L-lysyl-[protein] + S-adenosyl-L-methionine = N-terminal N-methyl-L-seryl-L-prolyl-L-lysyl-[protein] + S-adenosyl-L-homocysteine + H(+). In terms of biological role, alpha N-methyltransferase that methylates the N-terminus of target proteins containing the N-terminal motif [Ala/Pro/Ser]-Pro-Lys when the initiator Met is cleaved. Specifically catalyzes monomethylation of exposed alpha-amino group of Ala or Ser residue in the [Ala/Ser]-Pro-Lys motif and Pro in the Pro-Pro-Lys motif. Predominantly functions as a mono-methyltransferase but is also able to di-/tri-methylate the GPKRIA peptide and di-methylate the PPKRIA peptide (in vitro). May activate NTMT1 by priming its substrates for trimethylation. In Homo sapiens (Human), this protein is N-terminal Xaa-Pro-Lys N-methyltransferase 2.